We begin with the raw amino-acid sequence, 85 residues long: Protein RALF-like 28 (85 aa).

The N-terminal stretch at 1 to 31 is a signal peptide; that stretch reads MSILKETKRFMVVAMFIACVFISNNMNVAVA. 2 cysteine pairs are disulfide-bonded: cysteine 48–cysteine 53 and cysteine 66–cysteine 72. A disordered region spans residues 60 to 85; that stretch reads NPYHRGCEKSKRCRGPDPPALPRKMI. The span at 75-85 shows a compositional bias: pro residues; that stretch reads PDPPALPRKMI.

This sequence belongs to the plant rapid alkalinization factor (RALF) family.

The protein resides in the secreted. In terms of biological role, cell signaling peptide that may regulate plant stress, growth, and development. Mediates a rapid alkalinization of extracellular space by mediating a transient increase in the cytoplasmic Ca(2+) concentration leading to a calcium-dependent signaling events through a cell surface receptor and a concomitant activation of some intracellular mitogen-activated protein kinases. This is Protein RALF-like 28 (RALFL28) from Arabidopsis thaliana (Mouse-ear cress).